Consider the following 1013-residue polypeptide: EF-hand calcium-binding domain-containing protein 6 (1013 aa).

EF-hand domains are found at residues 20–55 (KNIK…FCLK), 145–180 (KSYE…FIYQ), 251–286 (DRSA…VAIK), 287–322 (LSDS…NCRM), and 352–387 (RNLQ…FCPF). Positions 441 to 460 (QKDEQQQPDLSERTKPTEDK) are disordered. EF-hand domains lie at 482–517 (QQDP…TGMP), 589–624 (ESFR…LLLN), 695–730 (NRWS…FDIP), 731–766 (LTPR…NYSP), 812–847 (DLHQ…CGCS), and 917–952 (SSQL…FCYK). Ca(2+) is bound by residues Asp-602, Asp-604, Asp-606, and Asp-613. At Thr-732 the chain carries Phosphothreonine.

In terms of assembly, microtubule inner protein component of sperm flagellar doublet microtubules. Binds PARK7. Part of a ternary complex containing PARK7, EFCAB6/DJBP and AR.

Its subcellular location is the nucleus. It is found in the cytoplasm. It localises to the cytoskeleton. The protein localises to the flagellum axoneme. Functionally, negatively regulates the androgen receptor by recruiting histone deacetylase complex, and protein DJ-1 antagonizes this inhibition by abrogation of this complex. Microtubule inner protein (MIP) part of the dynein-decorated doublet microtubules (DMTs) in cilia axoneme, which is required for motile cilia beating. This Pongo abelii (Sumatran orangutan) protein is EF-hand calcium-binding domain-containing protein 6 (EFCAB6).